Reading from the N-terminus, the 426-residue chain is Aspartate aminotransferase, mitochondrial (426 aa).

Residues 1 to 29 (MIRSARLISNIKFGQKNIRQFSTNTNWWA) constitute a mitochondrion transit peptide. 3 residues coordinate substrate: glycine 60, tryptophan 156, and asparagine 209. At lysine 273 the chain carries N6-(pyridoxal phosphate)lysine. A substrate-binding site is contributed by arginine 401.

This sequence belongs to the class-I pyridoxal-phosphate-dependent aminotransferase family. In terms of assembly, homodimer. Requires pyridoxal 5'-phosphate as cofactor.

It localises to the mitochondrion matrix. The protein resides in the cell membrane. It carries out the reaction L-aspartate + 2-oxoglutarate = oxaloacetate + L-glutamate. The catalysed reaction is L-kynurenine + 2-oxoglutarate = kynurenate + L-glutamate + H2O. In terms of biological role, plays a key role in amino acid metabolism. Important for metabolite exchange between mitochondria and cytosol. The polypeptide is Aspartate aminotransferase, mitochondrial (aatA) (Dictyostelium discoideum (Social amoeba)).